We begin with the raw amino-acid sequence, 79 residues long: Succinate dehydrogenase assembly factor 1, mitochondrial (79 aa).

It belongs to the complex I LYR family. SDHAF1 subfamily. As to quaternary structure, interacts with SDH2 within an SDH1-SDH2 subcomplex.

The protein resides in the mitochondrion matrix. In terms of biological role, plays an essential role in the assembly of succinate dehydrogenase (SDH), an enzyme complex (also referred to as respiratory complex II) that is a component of both the tricarboxylic acid (TCA) cycle and the mitochondrial electron transport chain, and which couples the oxidation of succinate to fumarate with the reduction of ubiquinone (coenzyme Q) to ubiquinol. Promotes maturation of the iron-sulfur protein subunit SDH2 of the SDH catalytic dimer, protecting it from the deleterious effects of oxidants. Acts together with SDHAF3 (SDH7). This is Succinate dehydrogenase assembly factor 1, mitochondrial from Saccharomyces cerevisiae (strain YJM789) (Baker's yeast).